The following is a 396-amino-acid chain: Ribosomal RNA large subunit methyltransferase I (396 aa).

In terms of domain architecture, PUA spans 2-81; it reads TVSIYLAKGR…EAIDKDFFVR (80 aa).

This sequence belongs to the methyltransferase superfamily. RlmI family.

The protein localises to the cytoplasm. It carries out the reaction cytidine(1962) in 23S rRNA + S-adenosyl-L-methionine = 5-methylcytidine(1962) in 23S rRNA + S-adenosyl-L-homocysteine + H(+). Functionally, specifically methylates the cytosine at position 1962 (m5C1962) of 23S rRNA. The polypeptide is Ribosomal RNA large subunit methyltransferase I (Aliivibrio fischeri (strain MJ11) (Vibrio fischeri)).